The primary structure comprises 183 residues: MDPSQNPNIVHATTIISVRRGGHVAVAGDGQVTLGHTVMKGNARKVRRLGREGQVLAGFAGAAADAFTLFELFEAKLDKHGQLTRAAVELAKDWRTERRLGKLEALLAVADKETSLIISGTGDVIEPEDGIIAIGSGGSYALSAARALLAHTELDAKTIATEAINIAGDICIYTNRNVVVEEL.

Thr-13 is a catalytic residue. Na(+) contacts are provided by Gly-168, Cys-171, and Thr-174.

The protein belongs to the peptidase T1B family. HslV subfamily. A double ring-shaped homohexamer of HslV is capped on each side by a ring-shaped HslU homohexamer. The assembly of the HslU/HslV complex is dependent on binding of ATP.

The protein localises to the cytoplasm. The catalysed reaction is ATP-dependent cleavage of peptide bonds with broad specificity.. Its activity is regulated as follows. Allosterically activated by HslU binding. Its function is as follows. Protease subunit of a proteasome-like degradation complex believed to be a general protein degrading machinery. The sequence is that of ATP-dependent protease subunit HslV from Xanthomonas euvesicatoria pv. vesicatoria (strain 85-10) (Xanthomonas campestris pv. vesicatoria).